Consider the following 583-residue polypeptide: uncharacterized protein (583 aa).

This is an uncharacterized protein from Sinorhizobium fredii (strain NBRC 101917 / NGR234).